A 1152-amino-acid chain; its full sequence is P3N-PIPO polyprotein (1152 aa).

Residues 292–437 (VMNQQTLTAL…HTLTHRMVQY (146 aa)) form the Peptidase S30 domain. Residues histidine 345, aspartate 354, and serine 388 each act as for P1 proteinase activity in the active site. The Involved in interaction with stylet and aphid transmission motif lies at 489-492 (KITC). Positions 747-749 (PTK) match the Involved in virions binding and aphid transmission motif. One can recognise a Peptidase C6 domain in the interval 773 to 895 (MFVAKDGYCY…ESEMQHYRVG (123 aa)). Active-site for helper component proteinase activity residues include cysteine 781 and histidine 854.

The protein belongs to the potyviridae P3N-PIPO polyprotein family. Interacts (via PIPO domain) with host PCaP1 protein; this interaction may help to anchor the movement complex to the plasma membrane from which the complex could move to the plasmodesmata. Post-translationally, potyviral RNA is expressed as two polyproteins which undergo post-translational proteolytic processing. Genome polyprotein is processed by NIa-pro, P1 and HC-pro proteinases resulting in the production of at least ten individual proteins. P3N-PIPO is cleaved by P1 and HC-pro proteinases resulting in the production of three individual proteins. The P1 proteinase and the HC-pro cleave only their respective C-termini autocatalytically.

It is found in the host cell junction. The protein localises to the host plasmodesma. It carries out the reaction Hydrolyzes a Gly-|-Gly bond at its own C-terminus, commonly in the sequence -Tyr-Xaa-Val-Gly-|-Gly, in the processing of the potyviral polyprotein.. Its function is as follows. Required for aphid transmission and also has proteolytic activity. Only cleaves a Gly-Gly dipeptide at its own C-terminus. Interacts with virions and aphid stylets. Acts as a suppressor of RNA-mediated gene silencing, also known as post-transcriptional gene silencing (PTGS), a mechanism of plant viral defense that limits the accumulation of viral RNAs. May have RNA-binding activity. In terms of biological role, allows efficient cell to cell propagation, by bypassing the host cell wall barrier. Transports viral genome to neighboring plant cells directly through plasmosdesmata, without any budding. This is P3N-PIPO polyprotein from Carthamus tinctorius (Safflower).